Reading from the N-terminus, the 353-residue chain is Quinolinate synthase (353 aa).

Residues histidine 47 and serine 68 each contribute to the iminosuccinate site. Residue cysteine 113 participates in [4Fe-4S] cluster binding. Iminosuccinate is bound by residues 139–141 and serine 156; that span reads YAN. Residue cysteine 200 participates in [4Fe-4S] cluster binding. Iminosuccinate is bound by residues 226–228 and threonine 243; that span reads HPE. Cysteine 297 contributes to the [4Fe-4S] cluster binding site.

It belongs to the quinolinate synthase family. Type 1 subfamily. Requires [4Fe-4S] cluster as cofactor.

Its subcellular location is the cytoplasm. The catalysed reaction is iminosuccinate + dihydroxyacetone phosphate = quinolinate + phosphate + 2 H2O + H(+). The protein operates within cofactor biosynthesis; NAD(+) biosynthesis; quinolinate from iminoaspartate: step 1/1. Functionally, catalyzes the condensation of iminoaspartate with dihydroxyacetone phosphate to form quinolinate. This is Quinolinate synthase from Vibrio parahaemolyticus serotype O3:K6 (strain RIMD 2210633).